The sequence spans 1269 residues: Rho GTPase-activating protein 29 (1269 aa).

Phosphoserine occurs at positions 171, 176, 179, and 190. In terms of domain architecture, F-BAR spans 192 to 462 (IELDSMLLKN…SAKLYDPGQE (271 aa)). Positions 296 to 418 (RKNEMEKQRK…EILTQLRKLV (123 aa)) form a coiled coil. Disordered stretches follow at residues 472–523 (SAEE…NSAD) and 540–599 (DSES…NSLG). A phosphoserine mark is found at Ser499, Ser519, and Ser552. Residues 540 to 559 (DSESTGGSSESRSLDSESIS) are compositionally biased toward low complexity. The Phorbol-ester/DAG-type zinc-finger motif lies at 612 to 657 (THKFRKLRSPTKCRDCEGIVVFHGVECEECLLVCHRKCLENLVIIC). The region spanning 671 to 886 (AEFTQVAKKE…FLITYSQKIF (216 aa)) is the Rho-GAP domain. The tract at residues 909-936 (PGYLPKSLLSPEERDPERSMKSLFFSSK) is disordered. Position 918 is a phosphoserine (Ser918). Residues 919–928 (PEERDPERSM) show a composition bias toward basic and acidic residues. A phosphoserine mark is found at Ser954 and Ser1026. The disordered stretch occupies residues 1120-1269 (RSSGDHPVSI…DLEDEIPQFV (150 aa)). Residues 1128–1145 (SITQPSKPYTEPVRSTRQ) are compositionally biased toward polar residues. Phosphoserine occurs at positions 1152 and 1154. A compositionally biased stretch (polar residues) spans 1162-1172 (TPRTLQPQHWT). Basic and acidic residues predominate over residues 1229-1241 (SRPEEKAEERDQP). Acidic residues predominate over residues 1259–1269 (EDLEDEIPQFV). Residues 1266–1269 (PQFV) are interaction with PTPN13/PTPL1.

Interacts with PTPN13/PTPL1. Interacts with RAP2A via its coiled coil domain. Interacts with RASIP1.

Its function is as follows. GTPase activator for the Rho-type GTPases by converting them to an inactive GDP-bound state. Has strong activity toward RHOA, and weaker activity toward RAC1 and CDC42. May act as a specific effector of RAP2A to regulate Rho. In concert with RASIP1, suppresses RhoA signaling and dampens ROCK and MYH9 activities in endothelial cells and plays an essential role in blood vessel tubulogenesis. This is Rho GTPase-activating protein 29 (ARHGAP29) from Bos taurus (Bovine).